The following is a 478-amino-acid chain: Pyruvate kinase (478 aa).

R36 is a substrate binding site. K(+) contacts are provided by N38, S40, and D70. Residue 38–41 coordinates ATP; it reads NFSH. 2 residues coordinate ATP: R77 and K160. A Mg(2+)-binding site is contributed by E225. 3 residues coordinate substrate: G251, D252, and T284. D252 provides a ligand contact to Mg(2+).

This sequence belongs to the pyruvate kinase family. As to quaternary structure, homotetramer. Requires Mg(2+) as cofactor. The cofactor is K(+).

The enzyme catalyses pyruvate + ATP = phosphoenolpyruvate + ADP + H(+). The protein operates within carbohydrate degradation; glycolysis; pyruvate from D-glyceraldehyde 3-phosphate: step 5/5. Its activity is regulated as follows. Allosterically activated by AMP and by several sugar phosphates. Belongs to type II PK. This is Pyruvate kinase (pykA) from Haemophilus influenzae (strain ATCC 51907 / DSM 11121 / KW20 / Rd).